Here is a 214-residue protein sequence, read N- to C-terminus: Orotate phosphoribosyltransferase (214 aa).

Lys-26 serves as a coordination point for 5-phospho-alpha-D-ribose 1-diphosphate. 34 to 35 lines the orotate pocket; that stretch reads FF. 5-phospho-alpha-D-ribose 1-diphosphate contacts are provided by residues 72–73, Arg-99, Lys-100, Lys-103, His-105, and 124–132; these read YK and DDVITAGTA. Residues Thr-128 and Arg-156 each coordinate orotate.

Belongs to the purine/pyrimidine phosphoribosyltransferase family. PyrE subfamily. Homodimer. Requires Mg(2+) as cofactor.

It carries out the reaction orotidine 5'-phosphate + diphosphate = orotate + 5-phospho-alpha-D-ribose 1-diphosphate. The protein operates within pyrimidine metabolism; UMP biosynthesis via de novo pathway; UMP from orotate: step 1/2. In terms of biological role, catalyzes the transfer of a ribosyl phosphate group from 5-phosphoribose 1-diphosphate to orotate, leading to the formation of orotidine monophosphate (OMP). The protein is Orotate phosphoribosyltransferase of Pseudoalteromonas translucida (strain TAC 125).